The chain runs to 925 residues: Probable glycoprotein hormone G-protein coupled receptor (925 aa).

Positions 1–27 are cleaved as a signal peptide; the sequence is MEDRGICPRVLQVLFLVVLILISPVYA. The Extracellular portion of the chain corresponds to 28 to 529; sequence AKNDACTKCS…EDIMGYVWLT (502 aa). Asn-61 carries N-linked (GlcNAc...) asparagine glycosylation. LRR repeat units follow at residues 85 to 106, 110 to 131, 134 to 155, 156 to 180, 181 to 202, 203 to 224, 230 to 250, and 251 to 273; these read KLKY…RVKN, SLIT…AFDD, QLTQ…NKTS, SVTK…GNLP, SLEN…IFRQ, NTRL…NEDA, SLKT…RGLK, and NLHF…DSIR. N-linked (GlcNAc...) asparagine glycosylation is present at Asn-152. The N-linked (GlcNAc...) asparagine glycan is linked to Asn-212. Residues 299-493 are disordered; sequence TMQKPSTEEN…PTLIPHSNHT (195 aa). Positions 301–318 are enriched in polar residues; the sequence is QKPSTEENNGQTTASSPT. Residues 333 to 349 form a 1; truncated repeat; sequence STQPHTTSGFGGGGFPG. Positions 333-461 are 5 X approximate tandem repeats; it reads STQPHTTSGF…PGGGGFPGGG (129 aa). The span at 341-362 shows a compositional bias: gly residues; the sequence is GFGGGGFPGGGGGFPGGGGFPA. 3 tandem repeats follow at residues 350-384, 385-419, and 420-453. The span at 365 to 375 shows a compositional bias: polar residues; it reads SKTSTQPHTTS. A compositionally biased stretch (gly residues) spans 376–397; that stretch reads GFGGGGFPGGGGGFPGGGGFPA. Polar residues predominate over residues 400–410; the sequence is SKTSTQPHTTS. Gly residues predominate over residues 411 to 432; it reads GFGGGGFPGGGGGFPGGGGFPG. Polar residues predominate over residues 434–445; it reads SNTSTQPHTTSN. Residue Asn-435 is glycosylated (N-linked (GlcNAc...) asparagine). Residues 446–462 are compositionally biased toward gly residues; it reads SGGGGFPGGGGFPGGGT. The 5; truncated repeat unit spans residues 454–461; the sequence is GGGFPGGG. The segment covering 476-493 has biased composition (polar residues); that stretch reads VHQSTADPPTLIPHSNHT. Residue Asn-495 is glycosylated (N-linked (GlcNAc...) asparagine). Residues 530-551 form a helical membrane-spanning segment; sequence VVSFMVGAVALVANLVVALVLL. Over 552 to 561 the chain is Cytoplasmic; sequence TSQRRLNVTR. A helical membrane pass occupies residues 562–584; sequence FLMCNLAFADFILGLYIFILTSV. Over 585 to 606 the chain is Extracellular; sequence SAVTRGDYHNYVQQWQNGAGCK. Residues 607-628 form a helical membrane-spanning segment; sequence ILGFLAVFSSELSLFTLVMMTI. Residues 629 to 651 lie on the Cytoplasmic side of the membrane; it reads ERFYAIVHAMHMNARLSFRKTVR. A helical transmembrane segment spans residues 652-673; it reads FMIGGWIFALVMAVVPLTGVSG. At 674–691 the chain is on the extracellular side; the sequence is YSKVAICLPFDVSDATST. Residues 692-712 form a helical membrane-spanning segment; it reads AYVAFLLLVNGASFISVMYLY. The Cytoplasmic portion of the chain corresponds to 713-739; it reads SRMLYVVVSGGDMEGAPKRNDSKVAKR. The chain crosses the membrane as a helical span at residues 740–763; that stretch reads MAILVFTDMLCWAPIAFFGLLAAF. At 764–774 the chain is on the extracellular side; that stretch reads GQTLLTVTQSK. The helical transmembrane segment at 775-795 threads the bilayer; it reads ILLVFFFPINSICNPFLYAFF. At 796–925 the chain is on the cytoplasmic side; it reads TKAFKRELFT…QKQKILQSPS (130 aa). Residues 904–925 form a disordered region; it reads VTKSSSPPHLKLQKQKILQSPS.

This sequence belongs to the G-protein coupled receptor 1 family. FSH/LSH/TSH subfamily.

The protein resides in the cell membrane. Functionally, probable receptor for a glycoprotein hormone. The polypeptide is Probable glycoprotein hormone G-protein coupled receptor (Anthopleura elegantissima (Green aggregating anemone)).